A 417-amino-acid chain; its full sequence is Exodeoxyribonuclease 7 large subunit (417 aa).

It belongs to the XseA family. As to quaternary structure, heterooligomer composed of large and small subunits.

Its subcellular location is the cytoplasm. The catalysed reaction is Exonucleolytic cleavage in either 5'- to 3'- or 3'- to 5'-direction to yield nucleoside 5'-phosphates.. Bidirectionally degrades single-stranded DNA into large acid-insoluble oligonucleotides, which are then degraded further into small acid-soluble oligonucleotides. The protein is Exodeoxyribonuclease 7 large subunit of Lactococcus lactis subsp. cremoris (strain MG1363).